We begin with the raw amino-acid sequence, 893 residues long: TBC domain-containing protein kinase-like protein (893 aa).

The 273-residue stretch at 1 to 273 (MFPLKDAEMG…PDELMKDQVF (273 aa)) folds into the Protein kinase domain. Residues 466 to 651 (DIPPLMRGLT…HLWDTLLLGN (186 aa)) form the Rab-GAP TBC domain.

Belongs to the protein kinase superfamily. As to quaternary structure, component of the FERRY complex composed of five subunits, TBCK, PPP1R21, FERRY3, CRYZL1 and GATD1 with a ratio of 1:2:1:2:4, respectively.

The protein resides in the cytoplasm. It localises to the cytoskeleton. The protein localises to the spindle. Its subcellular location is the midbody. It is found in the early endosome. Component of the FERRY complex (Five-subunit Endosomal Rab5 and RNA/ribosome intermediary). The FERRY complex directly interacts with mRNAs and RAB5A, and functions as a RAB5A effector involved in the localization and the distribution of specific mRNAs most likely by mediating their endosomal transport. The complex recruits mRNAs and ribosomes to early endosomes through direct mRNA-interaction. Also involved in the modulation of mTOR signaling and expression of mTOR complex components. Involved in the control of actin-cytoskeleton organization. The chain is TBC domain-containing protein kinase-like protein (Tbck) from Mus musculus (Mouse).